Consider the following 486-residue polypeptide: Bifunctional protein HldE (486 aa).

A ribokinase region spans residues 1–331 (MAEHDDGDLI…VDAVKPASGA (331 aa)). Residue 208-211 (NRRE) coordinates ATP. Aspartate 277 is an active-site residue. The segment at 357-486 (FTNGCFDLLH…TTATVTRLRS (130 aa)) is cytidylyltransferase.

It in the N-terminal section; belongs to the carbohydrate kinase PfkB family. In the C-terminal section; belongs to the cytidylyltransferase family. Homodimer.

It carries out the reaction D-glycero-beta-D-manno-heptose 7-phosphate + ATP = D-glycero-beta-D-manno-heptose 1,7-bisphosphate + ADP + H(+). The enzyme catalyses D-glycero-beta-D-manno-heptose 1-phosphate + ATP + H(+) = ADP-D-glycero-beta-D-manno-heptose + diphosphate. Its pathway is nucleotide-sugar biosynthesis; ADP-L-glycero-beta-D-manno-heptose biosynthesis; ADP-L-glycero-beta-D-manno-heptose from D-glycero-beta-D-manno-heptose 7-phosphate: step 1/4. It functions in the pathway nucleotide-sugar biosynthesis; ADP-L-glycero-beta-D-manno-heptose biosynthesis; ADP-L-glycero-beta-D-manno-heptose from D-glycero-beta-D-manno-heptose 7-phosphate: step 3/4. Functionally, catalyzes the phosphorylation of D-glycero-D-manno-heptose 7-phosphate at the C-1 position to selectively form D-glycero-beta-D-manno-heptose-1,7-bisphosphate. Catalyzes the ADP transfer from ATP to D-glycero-beta-D-manno-heptose 1-phosphate, yielding ADP-D-glycero-beta-D-manno-heptose. In Acidiphilium cryptum (strain JF-5), this protein is Bifunctional protein HldE.